The sequence spans 510 residues: DAP3-binding cell death enhancer 1 (510 aa).

Residues 1–23 constitute a mitochondrion transit peptide; it reads MWRLTGILGRALPRLLGPGFRGI. Disordered stretches follow at residues 19–61 and 142–185; these read GFRG…SRDP and VLPR…SGLL. Positions 24 to 101 are cleaved as a propeptide — extended MTS; sequence TPKPTSSDGS…AVLALHLARQ (78 aa). Residues 35 to 45 show a composition bias toward low complexity; that stretch reads TTSPTLPLTRL. Composition is skewed to basic and acidic residues over residues 46-61 and 155-167; these read SFDR…SRDP and GLRE…EDHP. Residues 169 to 181 show a composition bias toward polar residues; sequence APSQCLPSDSSLR. TPR repeat units follow at residues 213–245, 246–278, 279–313, 314–351, 352–385, 386–423, and 471–499; these read AHPP…QLSV, AITF…RGYS, KAQY…VQGH, SLAQ…DSGL, TEAQ…SNGD, SQSR…GNEP, and ASST…TIPS. Positions 307 to 326 match the SIFI-degron motif; the sequence is LAAVQGHSLAQYRYARCLLQ.

The protein belongs to the DELE1 family. Interacts with DAP3. As to quaternary structure, interacts (via TPR repeats) with EIF2AK1/HRI; activating the protein kinase activity of EIF2AK1/HRI, thereby promoting the integrated stress response (ISR). In terms of assembly, homooctamer; oligomerization is required to activate EIF2AK1/HRI. Interacts (via TPR repeats) with EIF2AK1/HRI; activating the protein kinase activity of EIF2AK1/HRI, thereby promoting the integrated stress response (ISR). Unstable protein in absence of stress: imported in the mitochondrial matrix following processing by the mitochondrial-processing peptidase (MPP), where it is degraded by LONP1. Stabilized in response to iron deficiency: iron deficiency impairs mitochondrial import, promoting localization at the mitochondrial surface and stabilization. Cleaved by OMA1 in response to mitochondrial stress, generating the DAP3-binding cell death enhancer 1 short form (DELE1(S) or S-DELE1) that accumulates in the cytosol and activates the protein kinase activity of EIF2AK1/HRI. Protein cleavage by OMA1 can take place at different positions, and apparently does not require a specific sequence motif. Post-translationally, ubiquitinated and degraded by the SIFI complex once the mitochondrial stress has been resolved, thereby providing stress response silencing. Within the SIFI complex, UBR4 initiates ubiquitin chain that are further elongated or branched by KCMF1.

The protein resides in the mitochondrion. It localises to the mitochondrion outer membrane. It is found in the mitochondrion inner membrane. The protein localises to the cytoplasm. Its subcellular location is the cytosol. Functionally, protein kinase activator that acts as a key activator of the integrated stress response (ISR) following various stresses, such as iron deficiency, mitochondrial stress or mitochondrial DNA breaks. Detects impaired protein import and processing in mitochondria, activating the ISR. May also required for the induction of death receptor-mediated apoptosis through the regulation of caspase activation. In terms of biological role, protein kinase activator that activates the ISR in response to iron deficiency: iron deficiency impairs mitochondrial import, promoting DELE1 localization at the mitochondrial surface, where it binds and activates EIF2AK1/HRI to trigger the ISR. Protein kinase activator generated by protein cleavage in response to mitochondrial stress, which accumulates in the cytosol and specifically binds to and activates the protein kinase activity of EIF2AK1/HRI. It thereby activates the integrated stress response (ISR): EIF2AK1/HRI activation promotes eIF-2-alpha (EIF2S1) phosphorylation, leading to a decrease in global protein synthesis and the induction of selected genes, including the transcription factor ATF4, the master transcriptional regulator of the ISR. Also acts as an activator of PRKN-independent mitophagy: activates the protein kinase activity of EIF2AK1/HRI in response to mitochondrial damage, promoting eIF-2-alpha (EIF2S1) phosphorylation, leading to mitochondrial localization of EIF2S1 followed by induction of mitophagy. The chain is DAP3-binding cell death enhancer 1 from Mus musculus (Mouse).